The sequence spans 273 residues: E3 ubiquitin-protein ligase SDIR1 (273 aa).

Over 1 to 33 (MSFVFRGSRGDLESGFSGGFLPERRAMRVHGAR) the chain is Cytoplasmic. A helical transmembrane segment spans residues 34-54 (PVNSNSLAFLVTVLLLFMILN). At 55-56 (SH) the chain is on the lumenal side. Residues 57-77 (QMPPNFLLWLVLGVFLMATTL) traverse the membrane as a helical segment. Over 78–273 (RMYATCQQLQ…EIDDDASDMV (196 aa)) the chain is Cytoplasmic. The segment at 211–252 (CSVCLEQVTVGEIVRTLPCLHQFHAGCIDPWLRQQGTCPVCK) adopts an RING-type; atypical zinc-finger fold.

As to quaternary structure, interacts with ATP1/SDIRIP1. Ubiquitous.

Its subcellular location is the endoplasmic reticulum membrane. The enzyme catalyses S-ubiquitinyl-[E2 ubiquitin-conjugating enzyme]-L-cysteine + [acceptor protein]-L-lysine = [E2 ubiquitin-conjugating enzyme]-L-cysteine + N(6)-ubiquitinyl-[acceptor protein]-L-lysine.. E3 ubiquitin-protein ligase that acts as a positive regulator of abscisic acid-related stress signal transduction. Interacts with and ubiquitinates ATP1/SDIRIP1 to modulate ATP1/SDIRIP1 stability through the 26S proteasome pathway. Regulates abscisic acid (ABA) and salt stress responses by negatively affecting ATP1/SDIRIP1 stability. The SDIR1-ATP1/SDIRIP1 complex plays an important role in ABA signaling through the ubiquitination pathway. This Arabidopsis thaliana (Mouse-ear cress) protein is E3 ubiquitin-protein ligase SDIR1.